The primary structure comprises 97 residues: uncharacterized protein (97 aa).

The interval 72–97 (TVERKRSEHTNSRKKDPSAYTWSDVK) is disordered. The segment covering 73–88 (VERKRSEHTNSRKKDP) has biased composition (basic and acidic residues).

It belongs to the chlamydial CPn_0121/CT_031/TC_0300 family.

This is an uncharacterized protein from Chlamydia pneumoniae (Chlamydophila pneumoniae).